A 273-amino-acid chain; its full sequence is Glucosamine-6-phosphate deaminase (273 aa).

The Proton acceptor; for enolization step role is filled by D72. D141 acts as the For ring-opening step in catalysis. H143 acts as the Proton acceptor; for ring-opening step in catalysis. E148 functions as the For ring-opening step in the catalytic mechanism.

Belongs to the glucosamine/galactosamine-6-phosphate isomerase family. As to quaternary structure, homohexamer.

It localises to the cytoplasm. The enzyme catalyses alpha-D-glucosamine 6-phosphate + H2O = beta-D-fructose 6-phosphate + NH4(+). It participates in nucleotide-sugar biosynthesis; UDP-N-acetyl-alpha-D-glucosamine biosynthesis; alpha-D-glucosamine 6-phosphate from D-fructose 6-phosphate: step 1/1. Functionally, catalyzes the reversible conversion of alpha-D-glucosamine 6-phosphate (GlcN-6P) into beta-D-fructose 6-phosphate (Fru-6P) and ammonium ion, a regulatory reaction step in de novo uridine diphosphate-N-acetyl-alpha-D-glucosamine (UDP-GlcNAc) biosynthesis via hexosamine pathway. This Drosophila melanogaster (Fruit fly) protein is Glucosamine-6-phosphate deaminase.